We begin with the raw amino-acid sequence, 560 residues long: DNA ligase B (560 aa).

Lys-124 (N6-AMP-lysine intermediate) is an active-site residue.

This sequence belongs to the NAD-dependent DNA ligase family. LigB subfamily.

It carries out the reaction NAD(+) + (deoxyribonucleotide)n-3'-hydroxyl + 5'-phospho-(deoxyribonucleotide)m = (deoxyribonucleotide)n+m + AMP + beta-nicotinamide D-nucleotide.. In terms of biological role, catalyzes the formation of phosphodiester linkages between 5'-phosphoryl and 3'-hydroxyl groups in double-stranded DNA using NAD as a coenzyme and as the energy source for the reaction. In Citrobacter koseri (strain ATCC BAA-895 / CDC 4225-83 / SGSC4696), this protein is DNA ligase B.